Here is a 374-residue protein sequence, read N- to C-terminus: Pectate lyase 3 (374 aa).

The N-terminal stretch at 1–22 (MKYLLPSAAAGLLLLAAQPTMA) is a signal peptide. A disulfide bridge connects residues Cys93 and Cys176. Ca(2+) contacts are provided by Asp150, Asp152, Glu187, and Asp191. Arg239 is an active-site residue. An intrachain disulfide couples Cys350 to Cys373.

It belongs to the polysaccharide lyase 1 family. PLADES subfamily. Requires Ca(2+) as cofactor.

It is found in the secreted. The enzyme catalyses Eliminative cleavage of (1-&gt;4)-alpha-D-galacturonan to give oligosaccharides with 4-deoxy-alpha-D-galact-4-enuronosyl groups at their non-reducing ends.. Its pathway is glycan metabolism; pectin degradation; 2-dehydro-3-deoxy-D-gluconate from pectin: step 2/5. Its function is as follows. Involved in maceration and soft-rotting of plant tissue. This chain is Pectate lyase 3 (pel3), found in Pectobacterium carotovorum (Erwinia carotovora).